Here is an 84-residue protein sequence, read N- to C-terminus: UPF0291 protein SMU_447 (84 aa).

The interval 57 to 84 (EGNDITPAKLKEIQRQKGIHGRKPEDNS) is disordered.

It belongs to the UPF0291 family.

The protein localises to the cytoplasm. In Streptococcus mutans serotype c (strain ATCC 700610 / UA159), this protein is UPF0291 protein SMU_447.